The sequence spans 362 residues: Serine/threonine-protein kinase SRK2E (362 aa).

Residues serine 7, serine 18, serine 29, and serine 43 each carry the phosphoserine; by autocatalysis modification. The 257-residue stretch at 21–277 (YELVKDIGSG…IPEIRNHEWF (257 aa)) folds into the Protein kinase domain. 27 to 35 (IGSGNFGVA) lines the ATP pocket. Lysine 50 contributes to the ATP binding site. Aspartate 140 (proton acceptor) is an active-site residue. The interval 160–186 (DFGYSKSSVLHSQPKSTVGTPAYIAPE) is activation loop. A Phosphoserine modification is found at serine 175. Residues 283 to 318 (ADLMNDNTMTTQFDESDQPGQSIEEIMQIIAEATVP) form a domain I; osmotic stress response, required for the kinase activity region. The domain II; ABA response and ABI1 binding stretch occupies residues 319 to 362 (PAGTQNLNHYLTGSLDIDDDMEEDLESDLDDLDIDSSGEIVYAM).

The protein belongs to the protein kinase superfamily. Ser/Thr protein kinase family. In terms of assembly, interacts with ABI1, PP2CA and SLAC1. Interacts with B'ALPHA, B'BETA, B'DELTA, PP2AA2, PP2AA3, PP2A1 and PP2A2. Associates with MAPKKK18 within the nucleus. Interacts with I-2, TOPP1 and TOPP2. Interacts with ABI2. Autophosphorylation on residues Ser-7, Ser-18, Ser-29, Ser-43, Ser-175 and/or Thr-176. Only the phosphorylation of Ser-175 is crucial for the kinase activity. The phosphorylation of Ser-43 may repress the ABA signaling pathway in absence of ABA. In terms of tissue distribution, expressed in seedlings, leaves, flowers, stems, and roots, but restricted to guard cells and vascular tissue.

The protein resides in the nucleus. The enzyme catalyses L-seryl-[protein] + ATP = O-phospho-L-seryl-[protein] + ADP + H(+). The catalysed reaction is L-threonyl-[protein] + ATP = O-phospho-L-threonyl-[protein] + ADP + H(+). With respect to regulation, kinase activity enhanced by ABA and low humidity. Repressed by PP2CA independently of its phosphatase activity. Probably inactivated by ABI1. Repressed by TOPP1. Negatively regulated by ABI2. Functionally, activator of the abscisic acid (ABA) signaling pathway that regulates numerous ABA responses, such as stomata closure in response to drought, darkness, high CO(2), plant pathogens, or decreases in atmospheric relative humidity (RH). Involved in the resistance to drought by avoiding water loss. Required for the stomata closure mediated by pathogen-associated molecular pattern (PAMPs) (e.g. flg22 and LPS) of pathogenic bacteria such as P.syringae pv. tomato (Pst) and E.coli O157:H7. As a plant defense process, stomata are closed transiently in order to limit invaders, but actively reopened by bacteria after a few hours; virulent strains (e.g. Pst DC3000) are more efficient than avirulent strains (e.g. Pst DC3000 AvrRpt2) in reopening stomata. Mediates the phosphorylation and activation of the S-type anion efflux channel SLAC1, and thus promotes stomata closure. Essential for stomatal closure in response to reactive oxygen species (ROS). Promotes MAPKKK18 activity upon abscisic acid (ABA) treatment. In Arabidopsis thaliana (Mouse-ear cress), this protein is Serine/threonine-protein kinase SRK2E.